The sequence spans 72 residues: uncharacterized protein (72 aa).

The N-terminal stretch at 1–19 (MKKWAVIISAVGLAFAVSG) is a signal peptide. Residue C20 is the site of N-palmitoyl cysteine attachment. Residue C20 is the site of S-diacylglycerol cysteine attachment.

To E.coli YgdI.

The protein resides in the cell membrane. This is an uncharacterized protein from Escherichia coli O6:H1 (strain CFT073 / ATCC 700928 / UPEC).